The chain runs to 115 residues: Macrophage migration inhibitory factor (115 aa).

Residue P2 is the Proton acceptor; via imino nitrogen of the active site. 2 residues coordinate substrate: K33 and I65. K78 carries the post-translational modification N6-acetyllysine; alternate. K78 carries the N6-succinyllysine; alternate modification. N98 provides a ligand contact to substrate.

The protein belongs to the MIF family. Homotrimer. Interacts with CD74 and CXCR2 extracellular domain and COPS5. Interacts with the USO1 and BNIPL.

The protein resides in the secreted. It is found in the cytoplasm. It catalyses the reaction 3-phenylpyruvate = enol-phenylpyruvate. It carries out the reaction L-dopachrome = 5,6-dihydroxyindole-2-carboxylate. In terms of biological role, pro-inflammatory cytokine involved in the innate immune response to bacterial pathogens. The expression of MIF at sites of inflammation suggests a role as mediator in regulating the function of macrophages in host defense. Counteracts the anti-inflammatory activity of glucocorticoids. Has phenylpyruvate tautomerase and dopachrome tautomerase activity (in vitro), but the physiological substrate is not known. It is not clear whether the tautomerase activity has any physiological relevance, and whether it is important for cytokine activity. The chain is Macrophage migration inhibitory factor from Mus musculus (Mouse).